The following is a 105-amino-acid chain: uncharacterized protein (105 aa).

The next 2 membrane-spanning stretches (helical) occupy residues 26–46 and 66–86; these read NVLI…CIAI and SALA…TLAI.

The protein resides in the cell membrane. This is an uncharacterized protein from Mycoplasma pneumoniae (strain ATCC 29342 / M129 / Subtype 1) (Mycoplasmoides pneumoniae).